The following is a 420-amino-acid chain: Tyrosine--tRNA ligase (420 aa).

Tyr-38 is an L-tyrosine binding site. The short motif at 43-52 (PTGDSLHIGH) is the 'HIGH' region element. L-tyrosine is bound by residues Tyr-169 and Gln-173. The short motif at 231 to 235 (KFGKS) is the 'KMSKS' region element. Lys-234 provides a ligand contact to ATP. In terms of domain architecture, S4 RNA-binding spans 353-419 (KNIVDFLVDT…GKRKYTLVTI (67 aa)).

This sequence belongs to the class-I aminoacyl-tRNA synthetase family. TyrS type 1 subfamily. As to quaternary structure, homodimer.

The protein resides in the cytoplasm. The enzyme catalyses tRNA(Tyr) + L-tyrosine + ATP = L-tyrosyl-tRNA(Tyr) + AMP + diphosphate + H(+). Its function is as follows. Catalyzes the attachment of tyrosine to tRNA(Tyr) in a two-step reaction: tyrosine is first activated by ATP to form Tyr-AMP and then transferred to the acceptor end of tRNA(Tyr). This Lactobacillus acidophilus (strain ATCC 700396 / NCK56 / N2 / NCFM) protein is Tyrosine--tRNA ligase.